A 411-amino-acid chain; its full sequence is LIM domain-binding protein 1 (411 aa).

Residue Ser-2 is modified to N-acetylserine. Thr-61 carries the phosphothreonine modification. 2 positions are modified to phosphoserine: Ser-265 and Ser-302. Disordered regions lie at residues 284–330 and 367–411; these read PPAE…TFAL and DAAN…QASQ. Residues 302–318 show a composition bias toward low complexity; sequence SGGSTMSSGGGNTNNSN. Residues 336-375 enclose the LIM interaction domain (LID) domain; sequence DVMVVGEPTLMGGEFGDEDERLITRLENTQFDAANGIDDE.

The protein belongs to the LDB family. In terms of assembly, interacts with ESR1. Forms homodimers and heterodimers. Interacts with and activates LHX1/LIM1. Interacts with the LIM domains of ISL1 and LMO2. Can assemble in a complex with LMO2 and TAL1/SCL but does not interact with TAL1/SCL directly. Strongly interacts with the LIM2 domain of LMX1A and more weakly with the LIM1 domain. Homodimerization is not required for, and does not effect, LMX1A-binding. Component of a nuclear TAL-1 complex composed at least of CBFA2T3, LDB1, TAL1 and TCF3. Interacts with LHX6 and LHX9. At neuronal promoters, forms a complex with LHX3 involved in the specification of interneurons, in motor neurons, it is displaced by ISL1 to form a ternary complex in which ISL1 contacts both LHX3 and LDB1. Interacts with SLK; leading to negatively regulate SLK kinase activity. Interacts with YWHAZ. Interacts with PRDM1/BLIMP1. Interacts with LMO4. Interacts with RLIM/RNF12; the interaction inhibits the ubiquitination of LMO proteins. In terms of processing, ubiquitinated by RLIM/RNF12, leading to its degradation by the proteasome. Expressed in multiple adult tissues including heart, brain, liver, kidney, testis, lung and muscle, with expression highest in the pituitary gland and skin.

It is found in the nucleus. In terms of biological role, binds to the LIM domain of a wide variety of LIM domain-containing transcription factors. May regulate the transcriptional activity of LIM-containing proteins by determining specific partner interactions. Plays a role in the development of interneurons and motor neurons in cooperation with LHX3 and ISL1. Acts synergistically with LHX1/LIM1 in axis formation and activation of gene expression. Acts with LMO2 in the regulation of red blood cell development, maintaining erythroid precursors in an immature state. This Mus musculus (Mouse) protein is LIM domain-binding protein 1 (Ldb1).